Here is a 325-residue protein sequence, read N- to C-terminus: Acetyl-coenzyme A carboxylase carboxyl transferase subunit alpha (325 aa).

Residues 38 to 292 (RLEDRLAKLQ…DETLKQSLKT (255 aa)) enclose the CoA carboxyltransferase C-terminal domain.

The protein belongs to the AccA family. As to quaternary structure, acetyl-CoA carboxylase is a heterohexamer composed of biotin carboxyl carrier protein (AccB), biotin carboxylase (AccC) and two subunits each of ACCase subunit alpha (AccA) and ACCase subunit beta (AccD).

The protein localises to the cytoplasm. It catalyses the reaction N(6)-carboxybiotinyl-L-lysyl-[protein] + acetyl-CoA = N(6)-biotinyl-L-lysyl-[protein] + malonyl-CoA. Its pathway is lipid metabolism; malonyl-CoA biosynthesis; malonyl-CoA from acetyl-CoA: step 1/1. With respect to regulation, inhibited by pyrrolidine dione antibiotics moiramide B (CPD1) and CPD2. Its function is as follows. Component of the acetyl coenzyme A carboxylase (ACC) complex. First, biotin carboxylase catalyzes the carboxylation of biotin on its carrier protein (BCCP) and then the CO(2) group is transferred by the carboxyltransferase to acetyl-CoA to form malonyl-CoA. This is Acetyl-coenzyme A carboxylase carboxyl transferase subunit alpha from Bacillus subtilis (strain 168).